The sequence spans 437 residues: Sulfite reductase, dissimilatory-type subunit alpha (437 aa).

8 residues coordinate [4Fe-4S] cluster: Cys-177, Cys-183, Cys-221, Cys-225, Cys-284, Cys-303, Cys-306, and Cys-309. A 4Fe-4S ferredoxin-type domain is found at 294–322 (SKLSIDNKECVRCMHCINTMPRALHIGDE).

In terms of assembly, heterohexamer of two alpha, two beta and two gamma subunits.

Functionally, part of the complex that catalyzes the reduction of sulfite to sulfide. The alpha and beta subunits may have arisen by gene duplication. They both bind 2 iron-sulfur clusters, but the alpha subunit seems to be catalytically inactive, due to substitutions along the putative substrate access channel, and because it binds sirohydrochlorin (the dematallated form of siroheme) instead of siroheme. The sequence is that of Sulfite reductase, dissimilatory-type subunit alpha (dsvA) from Nitratidesulfovibrio vulgaris (strain ATCC 29579 / DSM 644 / CCUG 34227 / NCIMB 8303 / VKM B-1760 / Hildenborough) (Desulfovibrio vulgaris).